Reading from the N-terminus, the 172-residue chain is Shikimate kinase (172 aa).

11–16 contacts ATP; sequence GAGKST. S15 provides a ligand contact to Mg(2+). Residues D33, R57, and G79 each contribute to the substrate site. R117 is a binding site for ATP. R136 provides a ligand contact to substrate. R153 is a binding site for ATP.

This sequence belongs to the shikimate kinase family. As to quaternary structure, monomer. The cofactor is Mg(2+).

It is found in the cytoplasm. It catalyses the reaction shikimate + ATP = 3-phosphoshikimate + ADP + H(+). It functions in the pathway metabolic intermediate biosynthesis; chorismate biosynthesis; chorismate from D-erythrose 4-phosphate and phosphoenolpyruvate: step 5/7. Catalyzes the specific phosphorylation of the 3-hydroxyl group of shikimic acid using ATP as a cosubstrate. The sequence is that of Shikimate kinase from Pseudomonas putida (strain ATCC 700007 / DSM 6899 / JCM 31910 / BCRC 17059 / LMG 24140 / F1).